The chain runs to 210 residues: Thymidylate kinase (210 aa).

10-17 (GPEGAGKS) serves as a coordination point for ATP.

It belongs to the thymidylate kinase family.

It catalyses the reaction dTMP + ATP = dTDP + ADP. Functionally, phosphorylation of dTMP to form dTDP in both de novo and salvage pathways of dTTP synthesis. This Pseudomonas fluorescens (strain SBW25) protein is Thymidylate kinase.